Here is a 1062-residue protein sequence, read N- to C-terminus: MQEVTSSFTPRVIEASVQKFWTQEDIYARVQEQNRDGKTWFFVDGPPYTTGHIHLGTAWNKILKDSILRYKRMHGLHVIDRAGYDMHGLPIEVRVEHELGFENKKDIEAFGIGAFIERCKQFALSHKDIMSEQFKSLGVWMNFDDPYQTIMPEYIEAAWWTLKQADEKGLLDRGHRVVNWCPRCETAIADSEVEYWDEQDPSIFVKFPIHGLMNEYLVIWTTTPWTLPANVAVAVDKDFIYARVEAIKEGKKEILWIAKDLVEPVLKRGKYQDYSILSEKTGEELAGTTYDSPLADLIPRQKEIVHTVVTAGFVEMDNTGMVHIAPGHGWDDYLLGVEKGLDVFCPVDGAGYYTDEGGIYAGQFVRDANEKILSDLGSHLLGRQKITHRYGHCWRCKTPIIYRATEQWFISVPKMKEKMLSEIKATSWYPDWAGSARFYDFVSDARDWCISRQRYWGIPIPVWQCSSCSAHRVFGTVAELNAAAGSNLTDPHRPYVDEITVPCSCGGTMKRVEDIFDVWFDSAMASWATLGFPRNDALFHEMWPADFITEGQDQTRGWFYSQLGASTIAFNRSPYKSVLMHGFALDADGRKMSKSLGNVVTPEEVVQKFGVDVLRLYILSSNAPWEDLKFNWDGVSTVNRTMNILWNVYRFPLPYMILDGFSPAQTSDGKYDDEYIVRSYREMPEIDRWIISRINTIARSVSADMDEYQLHRVTRLLMNFILEDLSRWYVQIVRPRMWLEEDSPDKKFAYETITYCLRTLCRLLAPFTPHITEAMYENLRLPEDPVSVHMLKWPAGDIRLIDENLERRMDVVRKFDEAVANARQAGKRKLRWPVQNVIVVTSSESVIEAFRSMEDLAKDRANTRNIEVIQGSWERMRFNAEPVMKKIGPSFGKKGPVVKGLIEAADGSALRKQLEESGSVTLSDGSEEFVLTAEHMTFSQHLPEGIFGAEMTDASVYVDTTLTEDLEAEGYSREIIRRLQEMRKQLDLNVEDNIVIDAVIEDVHLRELLSASWLDLIKQEVRGKTLKIHDSVGGRDGSVLFQLDRDWDIEGVNVTLGISLAG.

The 'HIGH' region signature appears at 47–57 (PYTTGHIHLGT). The short motif at 591–595 (KMSKS) is the 'KMSKS' region element. ATP is bound at residue lysine 594.

Belongs to the class-I aminoacyl-tRNA synthetase family. IleS type 2 subfamily. In terms of assembly, monomer. Zn(2+) is required as a cofactor.

It is found in the cytoplasm. The enzyme catalyses tRNA(Ile) + L-isoleucine + ATP = L-isoleucyl-tRNA(Ile) + AMP + diphosphate. In terms of biological role, catalyzes the attachment of isoleucine to tRNA(Ile). As IleRS can inadvertently accommodate and process structurally similar amino acids such as valine, to avoid such errors it has two additional distinct tRNA(Ile)-dependent editing activities. One activity is designated as 'pretransfer' editing and involves the hydrolysis of activated Val-AMP. The other activity is designated 'posttransfer' editing and involves deacylation of mischarged Val-tRNA(Ile). The sequence is that of Isoleucine--tRNA ligase from Methanospirillum hungatei JF-1 (strain ATCC 27890 / DSM 864 / NBRC 100397 / JF-1).